A 284-amino-acid polypeptide reads, in one-letter code: Acetyl-coenzyme A carboxylase carboxyl transferase subunit beta (284 aa).

The CoA carboxyltransferase N-terminal domain maps to 25 to 284; that stretch reads MWVKCPGCSA…ILGILYRPAA (260 aa). Residues Cys29, Cys32, Cys48, and Cys51 each contribute to the Zn(2+) site. The C4-type zinc finger occupies 29 to 51; sequence CPGCSATLLAKDLDANLNVCPTC.

The protein belongs to the AccD/PCCB family. In terms of assembly, acetyl-CoA carboxylase is a heterohexamer composed of biotin carboxyl carrier protein (AccB), biotin carboxylase (AccC) and two subunits each of ACCase subunit alpha (AccA) and ACCase subunit beta (AccD). Zn(2+) serves as cofactor.

The protein localises to the cytoplasm. It carries out the reaction N(6)-carboxybiotinyl-L-lysyl-[protein] + acetyl-CoA = N(6)-biotinyl-L-lysyl-[protein] + malonyl-CoA. Its pathway is lipid metabolism; malonyl-CoA biosynthesis; malonyl-CoA from acetyl-CoA: step 1/1. In terms of biological role, component of the acetyl coenzyme A carboxylase (ACC) complex. Biotin carboxylase (BC) catalyzes the carboxylation of biotin on its carrier protein (BCCP) and then the CO(2) group is transferred by the transcarboxylase to acetyl-CoA to form malonyl-CoA. This chain is Acetyl-coenzyme A carboxylase carboxyl transferase subunit beta, found in Pelobacter propionicus (strain DSM 2379 / NBRC 103807 / OttBd1).